Consider the following 526-residue polypeptide: PTS system alpha-glucoside-specific EIICB component (526 aa).

Positions Met-1–Asp-417 constitute a PTS EIIC type-1 domain. 12 consecutive transmembrane segments (helical) span residues Leu-12 to Leu-32, Gly-59 to Ala-79, Leu-88 to Trp-108, Ile-132 to Ile-152, Leu-173 to Trp-193, Ile-200 to Phe-220, Ile-224 to Val-244, Gly-274 to Met-294, Ile-305 to Pro-325, Phe-330 to Ala-350, Phe-355 to Leu-375, and Gly-381 to Phe-401. The PTS EIIB type-1 domain occupies Ser-447–Asn-526. Cys-469 functions as the Phosphocysteine intermediate; for EIIB activity in the catalytic mechanism.

The protein resides in the cell membrane. Functionally, the phosphoenolpyruvate-dependent sugar phosphotransferase system (sugar PTS), a major carbohydrate active -transport system, catalyzes the phosphorylation of incoming sugar substrates concomitantly with their translocation across the cell membrane. This system is involved in alpha-glucoside transport. This Fusobacterium mortiferum protein is PTS system alpha-glucoside-specific EIICB component (malB).